The chain runs to 560 residues: Putative transport protein VS_1837 (560 aa).

Helical transmembrane passes span 5–25 (VVLL…SIGL), 37–57 (LGNS…GFSF), 66–86 (FMLF…GIFF), 91–111 (HYLI…YFCS), and 155–175 (LGLV…VGLI). 2 consecutive RCK C-terminal domains span residues 203–292 (RGLG…FRNG) and 293–376 (KEVF…KIGF). The next 6 membrane-spanning stretches (helical) occupy residues 386 to 406 (LTAF…TMTF), 409 to 429 (VSFG…LGFL), 450 to 470 (LGLM…IFEH), 478 to 498 (VIGI…LVGA), 506 to 526 (ALLF…DIVN), and 539 to 559 (AGTY…IIII).

It belongs to the AAE transporter (TC 2.A.81) family. YbjL subfamily.

The protein localises to the cell membrane. This chain is Putative transport protein VS_1837, found in Vibrio atlanticus (strain LGP32) (Vibrio splendidus (strain Mel32)).